A 410-amino-acid chain; its full sequence is Indoleamine 2,3-dioxygenase nanC (410 aa).

Heme is bound at residue His309.

It belongs to the indoleamine 2,3-dioxygenase family. Heme serves as cofactor.

It carries out the reaction D-tryptophan + O2 = N-formyl-D-kynurenine. The enzyme catalyses L-tryptophan + O2 = N-formyl-L-kynurenine. It functions in the pathway secondary metabolite biosynthesis. Its function is as follows. Indoleamine 2,3-dioxygenase; part of the gene cluster that mediates the biosynthesis of the benzazepine alkaloid nanangelenin A which contains an unprecedented 3,4-dihydro-1-benzazepine-2,5-dione-N-prenyl-N-acetoxy-anthranilamide scaffold. The first step of nanangelenin biosynthesis is catalyzed by the indoleamine 2,3-dioxygenase nanC which produces N-formyl-kynurenine through the catabolism of tryptophan. The two-module NRPS nanA then utilizes anthranilate (Ant) and L-kynurenine (L-Kyn) to assemble the dipeptide product nanangelenin B. The first adenylation domain of nanA (A1) loads anthranilate onto the T1 domain, while A2 loads kynurenine, generated through spontaneous nonenzymatic deformylation of the nanC-supplied N-formyl-kynurenine. The peptide bond formation between the tethered amino acids is catalyzed by the first condensation domain (C1) between anthranilate's carbonyl carbon and kynurenine's aliphatic primary amine. The second C domain (C2) catalyzes the final cyclization event between the aromatic amine of kynurenine and the tethered carbonyl carbon, yielding nanangelenin B. The terminal T3 domain enhances the catalytic efficiency of C2, suggesting the T2-tethered Ant-L-Kyn is transferred to T3 prior to cyclization by C2. Once released from nanA, nanangelenin B is then prenylated by the prenyltransferase nanD to form nanangelenin C. Nanangelenin C is then N-hydroxylated by the FAD-dependent monooxygenase nanF and further acetylated by the acetyltransferase nanB to yield nanangelenin F. Finally, the N-methyltransferase nanE methylates the amide nitrogen of 1-benzazepine to convert nanangelenin F into nanangelenin A. NanE is also able to methylate most of the intermediates of the pathway such as nanangelenin B and nanangelenin C to produce nanangelenin D and nanangelenin E, respectively. In Aspergillus nanangensis, this protein is Indoleamine 2,3-dioxygenase nanC.